The primary structure comprises 311 residues: MYKQGEPNLWTGRLDSETDPKKFRHFQTVTFEDLSKLEKSSMPSGVGILGYAVDKGVALNKGRIGAKEGPDAIKQAFAGLPDLNQCETLVDYGNVYHDHEELIDTQKEFAMLAAKSIANHRQTFLLGGGHDIAYAQYLATRKVYPTQSIGVINIDAHFDTRAEQQSTSGTSFRQILEEDENTDYLVLGIAQGGNTQSLFDYAKEKKIDYVFADELLSHVSPTIKDMIERFVHEHDVIMFTICMDVIDSAFAPGVSAPAVLGLYPHTVLELAKRIIPSDKVSSVSIAEMNPTYDADNRTAKLVANLVHHFLK.

Residues His130, Asp155, His157, Asp159, Cys242, and Asp244 each contribute to the Mn(2+) site.

This sequence belongs to the arginase family. Requires Mn(2+) as cofactor.

It carries out the reaction N-formimidoyl-L-glutamate + H2O = formamide + L-glutamate. It participates in amino-acid degradation; L-histidine degradation into L-glutamate; L-glutamate from N-formimidoyl-L-glutamate (hydrolase route): step 1/1. In terms of biological role, catalyzes the conversion of N-formimidoyl-L-glutamate to L-glutamate and formamide. This is Formimidoylglutamase from Staphylococcus aureus (strain Mu3 / ATCC 700698).